A 253-amino-acid chain; its full sequence is 5-oxoprolinase subunit A (253 aa).

The protein belongs to the LamB/PxpA family. Forms a complex composed of PxpA, PxpB and PxpC.

The catalysed reaction is 5-oxo-L-proline + ATP + 2 H2O = L-glutamate + ADP + phosphate + H(+). In terms of biological role, catalyzes the cleavage of 5-oxoproline to form L-glutamate coupled to the hydrolysis of ATP to ADP and inorganic phosphate. This chain is 5-oxoprolinase subunit A, found in Bacillus cereus (strain AH820).